The primary structure comprises 207 residues: Ribonuclease HII (207 aa).

The 190-residue stretch at 12–201 folds into the RNase H type-2 domain; sequence ALVAGVDEVG…VRELLDVVSI (190 aa). A divalent metal cation-binding residues include Asp18, Glu19, and Asp110.

This sequence belongs to the RNase HII family. Requires Mn(2+) as cofactor. Mg(2+) serves as cofactor.

The protein localises to the cytoplasm. The enzyme catalyses Endonucleolytic cleavage to 5'-phosphomonoester.. In terms of biological role, endonuclease that specifically degrades the RNA of RNA-DNA hybrids. The chain is Ribonuclease HII from Azotobacter vinelandii (strain DJ / ATCC BAA-1303).